We begin with the raw amino-acid sequence, 179 residues long: Large ribosomal subunit protein uL5 (179 aa).

Belongs to the universal ribosomal protein uL5 family. As to quaternary structure, part of the 50S ribosomal subunit; part of the 5S rRNA/L5/L18/L25 subcomplex. Contacts the 5S rRNA and the P site tRNA. Forms a bridge to the 30S subunit in the 70S ribosome.

This is one of the proteins that bind and probably mediate the attachment of the 5S RNA into the large ribosomal subunit, where it forms part of the central protuberance. In the 70S ribosome it contacts protein S13 of the 30S subunit (bridge B1b), connecting the 2 subunits; this bridge is implicated in subunit movement. Contacts the P site tRNA; the 5S rRNA and some of its associated proteins might help stabilize positioning of ribosome-bound tRNAs. In Pseudomonas putida (strain ATCC 700007 / DSM 6899 / JCM 31910 / BCRC 17059 / LMG 24140 / F1), this protein is Large ribosomal subunit protein uL5.